We begin with the raw amino-acid sequence, 29 residues long: Glucagon (29 aa).

Belongs to the glucagon family.

The protein resides in the secreted. Its function is as follows. Glucagon plays a key role in glucose metabolism and homeostasis. Regulates blood glucose by increasing gluconeogenesis and decreasing glycolysis. This chain is Glucagon (GCG), found in Struthio camelus (Common ostrich).